The sequence spans 753 residues: 5-methyltetrahydropteroyltriglutamate--homocysteine methyltransferase (753 aa).

Residues Arg17–Lys20 and Lys117 contribute to the 5-methyltetrahydropteroyltri-L-glutamate site. L-homocysteine contacts are provided by residues Ile431–Ser433 and Glu484. L-methionine contacts are provided by residues Ile431–Ser433 and Glu484. 5-methyltetrahydropteroyltri-L-glutamate-binding positions include Arg515 to Cys516 and Trp561. Asp599 lines the L-homocysteine pocket. Asp599 serves as a coordination point for L-methionine. Glu605 serves as a coordination point for 5-methyltetrahydropteroyltri-L-glutamate. Residues His641, Cys643, and Glu665 each coordinate Zn(2+). Residue His694 is the Proton donor of the active site. Cys726 provides a ligand contact to Zn(2+).

The protein belongs to the vitamin-B12 independent methionine synthase family. Zn(2+) serves as cofactor.

It carries out the reaction 5-methyltetrahydropteroyltri-L-glutamate + L-homocysteine = tetrahydropteroyltri-L-glutamate + L-methionine. The protein operates within amino-acid biosynthesis; L-methionine biosynthesis via de novo pathway; L-methionine from L-homocysteine (MetE route): step 1/1. In terms of biological role, catalyzes the transfer of a methyl group from 5-methyltetrahydrofolate to homocysteine resulting in methionine formation. The polypeptide is 5-methyltetrahydropteroyltriglutamate--homocysteine methyltransferase (Shigella boydii serotype 4 (strain Sb227)).